Consider the following 283-residue polypeptide: Probable replication-associated protein repA1 (283 aa).

Belongs to the IncFII RepA family.

In terms of biological role, this protein is essential for plasmid replication; it is involved in copy control functions. This is Probable replication-associated protein repA1 (repA1) from Buchnera aphidicola subsp. Acyrthosiphon pisum (strain APS) (Acyrthosiphon pisum symbiotic bacterium).